The chain runs to 166 residues: NAD(P)H-quinone oxidoreductase subunit I, chloroplastic (166 aa).

4Fe-4S ferredoxin-type domains follow at residues 55-84 (GRIHFEFDKCIACEVCVRVCPIDLPVVDWK) and 95-124 (LNYSIDFGICIFCGNCVEYCPTNCLSMTEE). [4Fe-4S] cluster contacts are provided by Cys-64, Cys-67, Cys-70, Cys-74, Cys-104, Cys-107, Cys-110, and Cys-114.

It belongs to the complex I 23 kDa subunit family. As to quaternary structure, NDH is composed of at least 16 different subunits, 5 of which are encoded in the nucleus. Requires [4Fe-4S] cluster as cofactor.

The protein localises to the plastid. It localises to the chloroplast thylakoid membrane. It catalyses the reaction a plastoquinone + NADH + (n+1) H(+)(in) = a plastoquinol + NAD(+) + n H(+)(out). It carries out the reaction a plastoquinone + NADPH + (n+1) H(+)(in) = a plastoquinol + NADP(+) + n H(+)(out). Its function is as follows. NDH shuttles electrons from NAD(P)H:plastoquinone, via FMN and iron-sulfur (Fe-S) centers, to quinones in the photosynthetic chain and possibly in a chloroplast respiratory chain. The immediate electron acceptor for the enzyme in this species is believed to be plastoquinone. Couples the redox reaction to proton translocation, and thus conserves the redox energy in a proton gradient. The protein is NAD(P)H-quinone oxidoreductase subunit I, chloroplastic of Bahiopsis tomentosa (Tecote).